Here is a 152-residue protein sequence, read N- to C-terminus: Deoxyuridine 5'-triphosphate nucleotidohydrolase (152 aa).

Substrate-binding positions include 71 to 73, Asn-84, 88 to 90, and Met-98; these read RSG and LID.

Belongs to the dUTPase family. Mg(2+) serves as cofactor.

The catalysed reaction is dUTP + H2O = dUMP + diphosphate + H(+). It functions in the pathway pyrimidine metabolism; dUMP biosynthesis; dUMP from dCTP (dUTP route): step 2/2. Functionally, this enzyme is involved in nucleotide metabolism: it produces dUMP, the immediate precursor of thymidine nucleotides and it decreases the intracellular concentration of dUTP so that uracil cannot be incorporated into DNA. The chain is Deoxyuridine 5'-triphosphate nucleotidohydrolase from Pectobacterium carotovorum subsp. carotovorum (strain PC1).